The sequence spans 273 residues: Undecaprenyl-diphosphatase (273 aa).

7 helical membrane passes run 6-26, 45-65, 90-110, 116-136, 190-210, 222-242, and 252-272; these read SLLI…LPVS, AKTF…VMFW, LTLI…LLFH, LFNP…LIAA, YAAS…ATAL, GDIP…LIAI, and ISFI…YVVF.

Belongs to the UppP family.

Its subcellular location is the cell inner membrane. It catalyses the reaction di-trans,octa-cis-undecaprenyl diphosphate + H2O = di-trans,octa-cis-undecaprenyl phosphate + phosphate + H(+). In terms of biological role, catalyzes the dephosphorylation of undecaprenyl diphosphate (UPP). Confers resistance to bacitracin. The polypeptide is Undecaprenyl-diphosphatase (Escherichia coli O139:H28 (strain E24377A / ETEC)).